Here is a 367-residue protein sequence, read N- to C-terminus: UDP-N-acetylglucosamine--N-acetylmuramyl-(pentapeptide) pyrophosphoryl-undecaprenol N-acetylglucosamine transferase (367 aa).

Residues 15-17 (TGG), asparagine 127, arginine 163, serine 191, isoleucine 249, and glutamine 294 each bind UDP-N-acetyl-alpha-D-glucosamine.

It belongs to the glycosyltransferase 28 family. MurG subfamily.

Its subcellular location is the cell inner membrane. It carries out the reaction di-trans,octa-cis-undecaprenyl diphospho-N-acetyl-alpha-D-muramoyl-L-alanyl-D-glutamyl-meso-2,6-diaminopimeloyl-D-alanyl-D-alanine + UDP-N-acetyl-alpha-D-glucosamine = di-trans,octa-cis-undecaprenyl diphospho-[N-acetyl-alpha-D-glucosaminyl-(1-&gt;4)]-N-acetyl-alpha-D-muramoyl-L-alanyl-D-glutamyl-meso-2,6-diaminopimeloyl-D-alanyl-D-alanine + UDP + H(+). It functions in the pathway cell wall biogenesis; peptidoglycan biosynthesis. Cell wall formation. Catalyzes the transfer of a GlcNAc subunit on undecaprenyl-pyrophosphoryl-MurNAc-pentapeptide (lipid intermediate I) to form undecaprenyl-pyrophosphoryl-MurNAc-(pentapeptide)GlcNAc (lipid intermediate II). The polypeptide is UDP-N-acetylglucosamine--N-acetylmuramyl-(pentapeptide) pyrophosphoryl-undecaprenol N-acetylglucosamine transferase (Burkholderia pseudomallei (strain 1710b)).